A 328-amino-acid polypeptide reads, in one-letter code: MSKKPVRVAVTGAAGQIGYALLFRIASGEMLGKDQPVILQLLEVPVEGPQKALKGVMMELDDCAFPLLVEMTAHSDPMTAFKDADYALLVGSRPRGPGMERAELLAVNGAIFTAQGKALNAVASRDVRVLVVGNPANTNAYIAMKSAPDLPAKNFTAMLRLDHNRAASQIAAKTGKAVADIEKLTVWGNHSPTMYADYRFATIGGESVAQMINDQEWNANVFLPTVGKRGAAIIEARGSSSAASAANAAIDHMRDWALGTNGKWVTMGIPSGGEYGIPAETMFGFPVTCENGEYKIVEGLEIDAFSQERINITLAELEGEKAGVAHLL.

An NAD(+)-binding site is contributed by 12 to 18; sequence GAAGQIG. Positions 95 and 101 each coordinate substrate. NAD(+) is bound by residues Asn-108, Gln-115, and 132 to 134; that span reads VGN. Residues Asn-134 and Arg-165 each coordinate substrate. The active-site Proton acceptor is His-190.

Belongs to the LDH/MDH superfamily. MDH type 2 family.

The enzyme catalyses (S)-malate + NAD(+) = oxaloacetate + NADH + H(+). In terms of biological role, catalyzes the reversible oxidation of malate to oxaloacetate. The chain is Malate dehydrogenase from Polaromonas naphthalenivorans (strain CJ2).